We begin with the raw amino-acid sequence, 70 residues long: Large ribosomal subunit protein bL31 (70 aa).

4 residues coordinate Zn(2+): Cys-16, Cys-18, Cys-36, and Cys-39.

The protein belongs to the bacterial ribosomal protein bL31 family. Type A subfamily. In terms of assembly, part of the 50S ribosomal subunit. Zn(2+) serves as cofactor.

Functionally, binds the 23S rRNA. In Tolumonas auensis (strain DSM 9187 / NBRC 110442 / TA 4), this protein is Large ribosomal subunit protein bL31.